Here is a 139-residue protein sequence, read N- to C-terminus: Lymphocyte antigen 6H (139 aa).

The first 25 residues, 1 to 25 (MLPAAMKSLGLALLALLLCPSPAHG), serve as a signal peptide directing secretion. Positions 26–113 (LWCQDCTLAN…CEKDLCNGAS (88 aa)) constitute a UPAR/Ly6 domain. Disulfide bonds link Cys28–Cys51, Cys31–Cys39, Cys44–Cys72, Cys76–Cys103, and Cys104–Cys109. N-linked (GlcNAc...) asparagine glycosylation occurs at Asn35. The GPI-anchor amidated asparagine moiety is linked to residue Asn110. A propeptide spans 111–139 (GASVAGRSPWALAGGLLLSLGPALLWAGP) (removed in mature form).

Interacts with CHRNA4 and CHRNA7. Strongly expressed in brain, also found in lower levels in eye and reproductive tissues.

It localises to the cell membrane. Its function is as follows. Believed to act as modulator of nicotinic acetylcholine receptors (nAChRs) activity. In vitro inhibits alpha-3:beta-4-containing nAChRs maximum response. In vitro inhibits alpha-3:beta-4-containing nAChRs maximum response. May play a role in the intracellular trafficking of alpha-7-containing nAChRs and may inhibit their expression at the cell surface. Seems to inhibit alpha-7/CHRNA7 signaling in hippocampal neurons. The sequence is that of Lymphocyte antigen 6H (Ly6h) from Mus musculus (Mouse).